The sequence spans 669 residues: Methionine--tRNA ligase (669 aa).

The 'HIGH' region signature appears at 14–24; it reads YYPSGKLHIGN. His-161 serves as a coordination point for Zn(2+). The 'KMSKS' region signature appears at 309 to 313; it reads KMSKS. Lys-312 is an ATP binding site. Residues 566–669 enclose the tRNA-binding domain; it reads DFDKVELKVA…KEMPNGAGIA (104 aa).

This sequence belongs to the class-I aminoacyl-tRNA synthetase family. MetG type 2B subfamily. As to quaternary structure, homodimer.

Its subcellular location is the cytoplasm. It catalyses the reaction tRNA(Met) + L-methionine + ATP = L-methionyl-tRNA(Met) + AMP + diphosphate. In terms of biological role, is required not only for elongation of protein synthesis but also for the initiation of all mRNA translation through initiator tRNA(fMet) aminoacylation. The polypeptide is Methionine--tRNA ligase (Enterococcus faecalis (strain ATCC 700802 / V583)).